Consider the following 301-residue polypeptide: Recombination-associated protein RdgC (301 aa).

It belongs to the RdgC family.

The protein resides in the cytoplasm. It is found in the nucleoid. In terms of biological role, may be involved in recombination. The chain is Recombination-associated protein RdgC from Xanthomonas oryzae pv. oryzae (strain MAFF 311018).